The chain runs to 830 residues: Periplasmic nitrate reductase (830 aa).

A signal peptide (tat-type signal) is located at residues 1–31 (MKLSRRDFMKANAAVAAAAAAGMTIPTVAKA). Residues 39 to 95 (IKWDKAPCRFCGTGCGVLVGTQNGRIVASQGDPDSPVNRGLNCIKGYFLPKIMYGKD) form the 4Fe-4S Mo/W bis-MGD-type domain. The [4Fe-4S] cluster site is built by cysteine 46, cysteine 49, cysteine 53, and cysteine 81. Residues lysine 83, glutamine 150, asparagine 175, cysteine 179, 212–219 (WGSNMAEM), 243–247 (STYEH), 262–264 (QTD), methionine 372, glutamine 376, asparagine 482, 508–509 (SD), lysine 531, aspartate 558, and 718–727 (TGRVLEHWHT) contribute to the Mo-bis(molybdopterin guanine dinucleotide) site. Phenylalanine 794 serves as a coordination point for substrate. Positions 802 and 819 each coordinate Mo-bis(molybdopterin guanine dinucleotide).

It belongs to the prokaryotic molybdopterin-containing oxidoreductase family. NasA/NapA/NarB subfamily. Component of the periplasmic nitrate reductase NapAB complex composed of NapA and NapB. It depends on [4Fe-4S] cluster as a cofactor. Mo-bis(molybdopterin guanine dinucleotide) is required as a cofactor. Predicted to be exported by the Tat system. The position of the signal peptide cleavage has not been experimentally proven.

It is found in the periplasm. It carries out the reaction 2 Fe(II)-[cytochrome] + nitrate + 2 H(+) = 2 Fe(III)-[cytochrome] + nitrite + H2O. Functionally, catalytic subunit of the periplasmic nitrate reductase complex NapAB. Receives electrons from NapB and catalyzes the reduction of nitrate to nitrite. This chain is Periplasmic nitrate reductase, found in Yersinia pseudotuberculosis serotype IB (strain PB1/+).